A 371-amino-acid chain; its full sequence is tRNA-specific 2-thiouridylase MnmA (371 aa).

ATP contacts are provided by residues 13–20 and M39; that span reads GMSGGVDS. The interaction with target base in tRNA stretch occupies residues 99–101; sequence NPD. C104 (nucleophile) is an active-site residue. A disulfide bond links C104 and C200. G128 serves as a coordination point for ATP. The tract at residues 150–152 is interaction with tRNA; it reads KDQ. The Cysteine persulfide intermediate role is filled by C200. The segment at 308 to 309 is interaction with tRNA; the sequence is RY.

The protein belongs to the MnmA/TRMU family.

It localises to the cytoplasm. The enzyme catalyses S-sulfanyl-L-cysteinyl-[protein] + uridine(34) in tRNA + AH2 + ATP = 2-thiouridine(34) in tRNA + L-cysteinyl-[protein] + A + AMP + diphosphate + H(+). In terms of biological role, catalyzes the 2-thiolation of uridine at the wobble position (U34) of tRNA, leading to the formation of s(2)U34. This chain is tRNA-specific 2-thiouridylase MnmA, found in Bacillus cytotoxicus (strain DSM 22905 / CIP 110041 / 391-98 / NVH 391-98).